Reading from the N-terminus, the 250-residue chain is Anamorsin homolog 1 (250 aa).

Positions methionine 1–phenylalanine 104 are N-terminal SAM-like domain. The interval phenylalanine 104–valine 149 is linker. [2Fe-2S] cluster is bound by residues cysteine 155, cysteine 162, cysteine 165, and cysteine 167. A fe-S binding site A region spans residues cysteine 155–cysteine 167. 4 residues coordinate [4Fe-4S] cluster: cysteine 193, cysteine 196, cysteine 204, and cysteine 207. 2 consecutive short sequence motifs (cx2C motif) follow at residues cysteine 193–cysteine 196 and cysteine 204–cysteine 207. The fe-S binding site B stretch occupies residues cysteine 193 to cysteine 207.

The protein belongs to the anamorsin family. As to quaternary structure, monomer. [2Fe-2S] cluster serves as cofactor. [4Fe-4S] cluster is required as a cofactor.

The protein localises to the cytoplasm. It localises to the mitochondrion intermembrane space. In terms of biological role, component of the cytosolic iron-sulfur (Fe-S) protein assembly (CIA) machinery. Required for the maturation of extramitochondrial Fe-S proteins. Part of an electron transfer chain functioning in an early step of cytosolic Fe-S biogenesis, facilitating the de novo assembly of a [4Fe-4S] cluster on the cytosolic Fe-S scaffold complex. Electrons are transferred from NADPH via a FAD- and FMN-containing diflavin oxidoreductase. Together with the diflavin oxidoreductase, also required for the assembly of the diferric tyrosyl radical cofactor of ribonucleotide reductase (RNR), probably by providing electrons for reduction during radical cofactor maturation in the catalytic small subunit. This Paramecium tetraurelia protein is Anamorsin homolog 1.